The primary structure comprises 142 residues: MAKKVQAYVKLQVAAGMANPSPPVGPALGQQGVNIMEFCKAFNAKTESMEKGLPIPVVITVYADRSFTFVTKTPPAAVLLKKAAGIKSGSGKPNKDKVGKISRAQLQEIAQTKAADMTGADIEAMTRSIEGTARSMGLVVED.

This sequence belongs to the universal ribosomal protein uL11 family. As to quaternary structure, part of the ribosomal stalk of the 50S ribosomal subunit. Interacts with L10 and the large rRNA to form the base of the stalk. L10 forms an elongated spine to which L12 dimers bind in a sequential fashion forming a multimeric L10(L12)X complex. In terms of processing, one or more lysine residues are methylated.

Functionally, forms part of the ribosomal stalk which helps the ribosome interact with GTP-bound translation factors. The protein is Large ribosomal subunit protein uL11 of Klebsiella pneumoniae (strain 342).